Consider the following 453-residue polypeptide: Phenylalanine-4-hydroxylase (453 aa).

At Ala-2 the chain carries N-acetylalanine. Residue Ser-16 is modified to Phosphoserine. In terms of domain architecture, ACT spans 36 to 114; it reads SLIFSLKEEV…TVHELSRDKE (79 aa). The Fe cation site is built by His-285, His-290, and Glu-330.

This sequence belongs to the biopterin-dependent aromatic amino acid hydroxylase family. In terms of assembly, homodimer and homotetramer. It depends on Fe(2+) as a cofactor. Phosphorylation at Ser-16 increases basal activity and facilitates activation by the substrate phenylalanine.

It catalyses the reaction (6R)-L-erythro-5,6,7,8-tetrahydrobiopterin + L-phenylalanine + O2 = (4aS,6R)-4a-hydroxy-L-erythro-5,6,7,8-tetrahydrobiopterin + L-tyrosine. It participates in amino-acid degradation; L-phenylalanine degradation; acetoacetate and fumarate from L-phenylalanine: step 1/6. Its activity is regulated as follows. N-terminal region of PAH is thought to contain allosteric binding sites for phenylalanine and to constitute an 'inhibitory' domain that regulates the activity of a catalytic domain in the C-terminal portion of the molecule. Catalyzes the hydroxylation of L-phenylalanine to L-tyrosine. The sequence is that of Phenylalanine-4-hydroxylase (Pah) from Mus musculus (Mouse).